The chain runs to 218 residues: Chromophore lyase CpcT/CpeT 1 (218 aa).

This sequence belongs to the CpcT/CpeT biliprotein lyase family.

Covalently attaches a chromophore to Cys residue(s) of phycobiliproteins. The chain is Chromophore lyase CpcT/CpeT 1 from Synechococcus sp. (strain JA-3-3Ab) (Cyanobacteria bacterium Yellowstone A-Prime).